A 134-amino-acid polypeptide reads, in one-letter code: MTIRPAYRPKIVKKRTKHFIRHQSDRYAKLSHKWRKPKGIDNRVRRRFKGQYLMPNIGYGSNKRTRHMLPTGFKKFLVHNVRELEVLLMQNREYCGEIAHGVSSNKRKEIVERAKQLSVRLTNPNARLRSQENE.

This sequence belongs to the eukaryotic ribosomal protein eL32 family.

This Drosophila acanthoptera (Fruit fly) protein is Large ribosomal subunit protein eL32 (RpL32).